The chain runs to 370 residues: Cytochrome b (370 aa).

Helical transmembrane passes span 25 to 45 (FGSMLLACLTLQLLTGFFLAV), 69 to 90 (WMMQNLHAIGASMFFICIYIHI), 105 to 125 (WFSGTTLLIMLMATAFFGYVL), and 170 to 190 (FFALHFILPFGIISLSSLHIL). The heme b site is built by histidine 75 and histidine 89. Residues histidine 174 and histidine 188 each contribute to the heme b site. Position 193 (histidine 193) interacts with a ubiquinone. 4 helical membrane passes run 218-238 (YKDMLMLTIMTIMLLTIVSFF), 280-300 (LGGALALTMSIMMLLTLPFTH), 312-332 (FMQLTFWTFTATFLVISWTAT), and 339-358 (FTTISQVAALMYFLFFISNP).

This sequence belongs to the cytochrome b family. The cytochrome bc1 complex contains 3 respiratory subunits (MT-CYB, CYC1 and UQCRFS1), 2 core proteins (UQCRC1 and UQCRC2) and probably 6 low-molecular weight proteins. Requires heme b as cofactor.

Its subcellular location is the mitochondrion inner membrane. Its function is as follows. Component of the ubiquinol-cytochrome c reductase complex (complex III or cytochrome b-c1 complex) that is part of the mitochondrial respiratory chain. The b-c1 complex mediates electron transfer from ubiquinol to cytochrome c. Contributes to the generation of a proton gradient across the mitochondrial membrane that is then used for ATP synthesis. This Chilabothrus strigilatus mccraniei (Ragged Island boa constrictor) protein is Cytochrome b (MT-CYB).